Here is a 559-residue protein sequence, read N- to C-terminus: Acetylcholinesterase-1 (559 aa).

The first 21 residues, 1 to 21, serve as a signal peptide directing secretion; the sequence is MMLPRCFVTVLLMSSVLYIGG. Cys92 and Cys114 are joined by a disulfide. Residue 142-143 coordinates substrate; it reads GG. Ser223 (acyl-ester intermediate) is an active-site residue. Phosphoserine is present on Ser223. Residues Cys276 and Cys293 are joined by a disulfide bond. N-linked (GlcNAc...) asparagine glycans are attached at residues Asn278 and Asn342. The active-site Charge relay system is the Glu354. Residue Asn374 is glycosylated (N-linked (GlcNAc...) asparagine). The cysteines at positions 432 and 550 are disulfide-linked. His471 acts as the Charge relay system in catalysis.

This sequence belongs to the type-B carboxylesterase/lipase family. As to expression, expressed by the venom gland.

It localises to the secreted. The catalysed reaction is acetylcholine + H2O = choline + acetate + H(+). Terminates signal transduction at the neuromuscular junction by rapid hydrolysis of the acetylcholine released into the synaptic cleft. In Trittame loki (Brush-footed trapdoor spider), this protein is Acetylcholinesterase-1.